The following is a 772-amino-acid chain: Subtilisin-like protease SBT5.3 (772 aa).

The signal sequence occupies residues 1–25 (MKLTHNFSFLLLLLLVHMSSKHILA). An Inhibitor I9 domain is found at 31 to 116 (SYVVYFGAHS…VFPNKALKLH (86 aa)). A Peptidase S8 domain is found at 120–628 (SWDFLGLEHN…AGHVQPNLAV (509 aa)). Asp153 serves as the catalytic Charge relay system. N-linked (GlcNAc...) asparagine glycosylation occurs at Asn211. His223 functions as the Charge relay system in the catalytic mechanism. 3 N-linked (GlcNAc...) asparagine glycosylation sites follow: Asn246, Asn306, and Asn396. In terms of domain architecture, PA spans 398–480 (SALDAQLCKL…KDSFAVSRYI (83 aa)). Ser561 (charge relay system) is an active-site residue. Asn606, Asn651, Asn662, Asn684, and Asn725 each carry an N-linked (GlcNAc...) asparagine glycan.

Belongs to the peptidase S8 family. In terms of tissue distribution, expressed specifically at sites of lateral root emergence.

It is found in the secreted. It localises to the cell wall. Serine protease. Has a substrate preference for the hydrophobic residues Phe and Ala and the basic residue Asp in the P1 position, and for Asp, Leu or Ala in the P1' position. May play a role in the degradation of structural proteins in the extracellular matrix of cells located above sites of lateral root formation and thus facilitate lateral root emergence. The polypeptide is Subtilisin-like protease SBT5.3 (AIR3) (Arabidopsis thaliana (Mouse-ear cress)).